Reading from the N-terminus, the 739-residue chain is Nucleoprotein (739 aa).

The stretch at 334–363 forms a coiled coil; that stretch reads VNVGEQYQQLREAATEAEKQLQQYAESREL. Disordered regions lie at residues 414–475 and 498–642; these read RPNL…YHDD and FELQ…IGQS. Acidic residues predominate over residues 570–579; the sequence is TPIDQGDDDP. Residues 614-624 show a composition bias toward basic and acidic residues; sequence AEAHEPPHKSS. A compositionally biased stretch (polar residues) spans 625–634; it reads NEPAETSQLN.

This sequence belongs to the filoviruses nucleoprotein family. As to quaternary structure, homooligomer. Homomultimerizes to form the nucleocapsid. Binds to viral genomic RNA. Interacts with VP35 and VP30 to form the nucleocapsid. Interacts with host PPP2R5C; this interaction leads to VP30 dephosphorylation and viral transcription. Interacts with VP24; this interaction facilitates nucleocapsid assembly and genome packaging. Interacts with matrix protein VP40; this interaction allows recruitment of the nucleocapsid into progeny virions. Interacts with host STAU1. Interacts with host NXF1 (via RNA-binding domain); this interaction recruits NXF1 to the inclusion bodies were viral replication takes place, probably to export viral mRNA-NXF1 complexes from these sites. Interacts with host CCDC92; this interaction sequesters NP in the host cytoplasm. Interacts with host TRIM14. In terms of processing, phosphorylated and O-glycosylated by host. Acetylated by host EP300 in vitro.

The protein localises to the virion. The protein resides in the host cytoplasm. Oligomerizes into helical capsid to encapsidate the viral genome, protecting it from nucleases and the cellular innate immune response. VP35 binds to and stabilizes monomeric NP, keeping it soluble. Upon virus replication, NP is recruited to bind cooperatively viral genomic RNA and VP35 is released. The encapsidated genomic RNA is termed the nucleocapsid and serves as template for transcription and replication. The nucleocapsid is helical with a pitch of 10.81 NP per turn and a diameter of about 22nm. Each NP binds to six nucleotides of viral genomic RNA, three being exposed to the solvant and three hidden into the nucleocapsid. Also recruits host PPP2R5C phosphatase to dephosphorylate VP30 and thereby promote viral transcription. Upon virion assembly and budding, NP binds to VP24 and possibly host STAU1. The protein is Nucleoprotein (NP) of Homo sapiens (Human).